Reading from the N-terminus, the 578-residue chain is Probable multidrug ABC transporter ATP-binding protein YbhF (578 aa).

ABC transporter domains follow at residues 6-237 (ITLN…LMTS) and 330-559 (IEAK…PDPT). ATP contacts are provided by residues 40 to 47 (GPDGAGKT) and 362 to 369 (GPNGAGKS).

This sequence belongs to the ABC transporter superfamily. In terms of assembly, the complex is probably composed of two ATP-binding proteins (YbhF) and two transmembrane proteins (YbhR and YbhS).

Functionally, part of the ABC transporter complex YbhFSR that could be involved in efflux of cefoperazone. Probably responsible for energy coupling to the transport system. This chain is Probable multidrug ABC transporter ATP-binding protein YbhF (ybhF), found in Escherichia coli (strain K12).